A 226-amino-acid chain; its full sequence is Flagellar L-ring protein (226 aa).

An N-terminal signal peptide occupies residues methionine 1–glycine 15. Cysteine 16 is lipidated: N-palmitoyl cysteine. Cysteine 16 carries the S-diacylglycerol cysteine lipid modification.

It belongs to the FlgH family. The basal body constitutes a major portion of the flagellar organelle and consists of four rings (L,P,S, and M) mounted on a central rod.

It is found in the cell outer membrane. It localises to the bacterial flagellum basal body. Its function is as follows. Assembles around the rod to form the L-ring and probably protects the motor/basal body from shearing forces during rotation. The chain is Flagellar L-ring protein from Alteromonas mediterranea (strain DSM 17117 / CIP 110805 / LMG 28347 / Deep ecotype).